A 353-amino-acid polypeptide reads, in one-letter code: Probable peptidoglycan glycosyltransferase FtsW (353 aa).

8 helical membrane passes run 26 to 46, 53 to 73, 115 to 135, 137 to 157, 162 to 182, 242 to 262, 288 to 308, and 314 to 334; these read IFYF…PMSF, LILI…KSVH, FWGF…LLAE, DLGT…LSGV, FFII…FEPY, IIGE…IFFI, IGLW…GILP, and LPLI…ICIL.

Belongs to the SEDS family. FtsW subfamily.

It localises to the cell inner membrane. It carries out the reaction [GlcNAc-(1-&gt;4)-Mur2Ac(oyl-L-Ala-gamma-D-Glu-L-Lys-D-Ala-D-Ala)](n)-di-trans,octa-cis-undecaprenyl diphosphate + beta-D-GlcNAc-(1-&gt;4)-Mur2Ac(oyl-L-Ala-gamma-D-Glu-L-Lys-D-Ala-D-Ala)-di-trans,octa-cis-undecaprenyl diphosphate = [GlcNAc-(1-&gt;4)-Mur2Ac(oyl-L-Ala-gamma-D-Glu-L-Lys-D-Ala-D-Ala)](n+1)-di-trans,octa-cis-undecaprenyl diphosphate + di-trans,octa-cis-undecaprenyl diphosphate + H(+). Its pathway is cell wall biogenesis; peptidoglycan biosynthesis. Its function is as follows. Peptidoglycan polymerase that is essential for cell division. The sequence is that of Probable peptidoglycan glycosyltransferase FtsW from Buchnera aphidicola subsp. Schizaphis graminum (strain Sg).